We begin with the raw amino-acid sequence, 141 residues long: Large ribosomal subunit protein uL13 (141 aa).

The protein belongs to the universal ribosomal protein uL13 family. In terms of assembly, part of the 50S ribosomal subunit.

Functionally, this protein is one of the early assembly proteins of the 50S ribosomal subunit, although it is not seen to bind rRNA by itself. It is important during the early stages of 50S assembly. The chain is Large ribosomal subunit protein uL13 from Helicobacter pylori (strain G27).